Reading from the N-terminus, the 371-residue chain is Antibiotic efflux pump periplasmic linker protein ArpA (371 aa).

A signal peptide spans 1–22; the sequence is MQFKPAVTALVSAVALATLLSG. A lipid anchor (N-palmitoyl cysteine) is attached at C23. C23 carries the S-diacylglycerol cysteine lipid modification. The stretch at 115 to 155 forms a coiled coil; that stretch reads LAERYKQLIDEQAVSKQEYDDANAKRLQAEASLKSAQIDLR.

It belongs to the membrane fusion protein (MFP) (TC 8.A.1) family.

The protein localises to the cell inner membrane. Functionally, the periplasmic linker protein component of an antibiotic efflux pump. Confers resistance to numerous structurally unrelated antibiotics such as carbenicillin, chloramphenicol, erythromycin, novobiocin, streptomycin and tetracycline. Is not involved in organic solvent efflux. In Pseudomonas putida (Arthrobacter siderocapsulatus), this protein is Antibiotic efflux pump periplasmic linker protein ArpA (arpA).